Reading from the N-terminus, the 603-residue chain is Methylenetetrahydrofolate reductase 1 (603 aa).

Catalysis depends on E21, which acts as the Proton donor/acceptor. Residues 21 to 26 (EFFPPK) and 53 to 54 (TW) contribute to the NAD(+) site. FAD contacts are provided by residues 53-54 (TW), H82, 112-114 (RGD), 130-131 (YA), Y153, and K173. D114 lines the substrate pocket. Positions 184 and 276 each coordinate substrate. Position 355 is a phosphoserine (S355).

This sequence belongs to the methylenetetrahydrofolate reductase family. The cofactor is FAD.

It catalyses the reaction (6S)-5-methyl-5,6,7,8-tetrahydrofolate + NADP(+) = (6R)-5,10-methylene-5,6,7,8-tetrahydrofolate + NADPH + H(+). It carries out the reaction (6S)-5-methyl-5,6,7,8-tetrahydrofolate + NAD(+) = (6R)-5,10-methylene-5,6,7,8-tetrahydrofolate + NADH + H(+). It functions in the pathway one-carbon metabolism; tetrahydrofolate interconversion. Major methylenetetrahydrofolate reductase required to generate the methyl groups necessary for methionine synthetase to convert homocysteine to methionine. Performs 80 to 85 percent of the total methylenetetrahydrofolate reductase activity of the cells. This Schizosaccharomyces pombe (strain 972 / ATCC 24843) (Fission yeast) protein is Methylenetetrahydrofolate reductase 1 (met9).